The primary structure comprises 162 residues: UPF0114 protein VCM66_0196 (162 aa).

The next 4 helical transmembrane spans lie at 15-35, 53-73, 109-126, and 136-156; these read IMAP…IKFF, LILV…IVMV, VSAS…KVFM, and IKWY…MGYL.

This sequence belongs to the UPF0114 family.

The protein localises to the cell membrane. This is UPF0114 protein VCM66_0196 from Vibrio cholerae serotype O1 (strain M66-2).